Here is a 501-residue protein sequence, read N- to C-terminus: DDB1- and CUL4-associated factor 12-like protein 1 (501 aa).

The segment covering 1-37 (MRQADSQTQPSPAEQETPQPAGPSNRSPPTMGPQQTG) has biased composition (polar residues). Positions 1–67 (MRQADSQTQP…PAAPMATAGE (67 aa)) are disordered. 4 WD repeats span residues 185–225 (PPSC…PVCL), 230–268 (GHRD…FNGS), 298–337 (PGNR…SRLL), and 384–423 (SREG…FLEE).

Belongs to the WD repeat DCAF12 family.

The protein is DDB1- and CUL4-associated factor 12-like protein 1 (Dcaf12l1) of Mus musculus (Mouse).